The chain runs to 477 residues: PTS system glucose-specific EIICB component (477 aa).

The 388-residue stretch at 1–388 (MFKNVFANLQ…FNLDTPGREN (388 aa)) folds into the PTS EIIC type-1 domain. Transmembrane regions (helical) follow at residues 15–35 (SLML…IGSA), 51–71 (TGGS…ALGF), 76–96 (GVAA…LTAV), 112–132 (HLSD…AYMF), 152–172 (FVPI…SLIW), 191–211 (PILA…FGLH), 250–270 (LSGG…AIWH), 280–300 (IGSI…TEPI), 304–324 (FIIV…LSFP), and 357–377 (FPII…LFII). The region spanning 399 to 477 (NEIAPYIITA…TAMDECIKNI (79 aa)) is the PTS EIIB type-1 domain. Cysteine 421 functions as the Phosphocysteine intermediate; for EIIB activity in the catalytic mechanism. Residue cysteine 421 is modified to Phosphocysteine.

The protein resides in the cell inner membrane. The enzyme catalyses N(pros)-phospho-L-histidyl-[protein] + D-glucose(out) = D-glucose 6-phosphate(in) + L-histidyl-[protein]. In terms of biological role, the phosphoenolpyruvate-dependent sugar phosphotransferase system (sugar PTS), a major carbohydrate active transport system, catalyzes the phosphorylation of incoming sugar substrates concomitantly with their translocation across the cell membrane. The enzyme II complex composed of PtsG and Crr is involved in glucose transport. This chain is PTS system glucose-specific EIICB component (ptsG), found in Buchnera aphidicola subsp. Acyrthosiphon pisum (strain APS) (Acyrthosiphon pisum symbiotic bacterium).